We begin with the raw amino-acid sequence, 544 residues long: Methionine--tRNA ligase (544 aa).

The short motif at 10–20 (PYANGSLHLGH) is the 'HIGH' region element. Positions 141, 144, 153, and 156 each coordinate Zn(2+). The short motif at 329–333 (KLSTS) is the 'KMSKS' region element. An ATP-binding site is contributed by threonine 332.

The protein belongs to the class-I aminoacyl-tRNA synthetase family. MetG type 1 subfamily. In terms of assembly, monomer. The cofactor is Zn(2+).

The protein localises to the cytoplasm. The catalysed reaction is tRNA(Met) + L-methionine + ATP = L-methionyl-tRNA(Met) + AMP + diphosphate. Functionally, is required not only for elongation of protein synthesis but also for the initiation of all mRNA translation through initiator tRNA(fMet) aminoacylation. In Bacillus cereus (strain Q1), this protein is Methionine--tRNA ligase.